A 101-amino-acid polypeptide reads, in one-letter code: Small ribosomal subunit protein uS14 (101 aa).

It belongs to the universal ribosomal protein uS14 family. In terms of assembly, part of the 30S ribosomal subunit. Contacts proteins S3 and S10.

Its function is as follows. Binds 16S rRNA, required for the assembly of 30S particles and may also be responsible for determining the conformation of the 16S rRNA at the A site. In Polaromonas sp. (strain JS666 / ATCC BAA-500), this protein is Small ribosomal subunit protein uS14.